A 202-amino-acid polypeptide reads, in one-letter code: Probable ATP-dependent Clp protease proteolytic subunit 3 (202 aa).

The Nucleophile role is filled by Ser-101. Residue His-126 is part of the active site.

Belongs to the peptidase S14 family. In terms of assembly, fourteen ClpP subunits assemble into 2 heptameric rings which stack back to back to give a disk-like structure with a central cavity, resembling the structure of eukaryotic proteasomes.

Its subcellular location is the cytoplasm. The catalysed reaction is Hydrolysis of proteins to small peptides in the presence of ATP and magnesium. alpha-casein is the usual test substrate. In the absence of ATP, only oligopeptides shorter than five residues are hydrolyzed (such as succinyl-Leu-Tyr-|-NHMec, and Leu-Tyr-Leu-|-Tyr-Trp, in which cleavage of the -Tyr-|-Leu- and -Tyr-|-Trp bonds also occurs).. Functionally, cleaves peptides in various proteins in a process that requires ATP hydrolysis. Has a chymotrypsin-like activity. Plays a major role in the degradation of misfolded proteins. The chain is Probable ATP-dependent Clp protease proteolytic subunit 3 from Synechocystis sp. (strain ATCC 27184 / PCC 6803 / Kazusa).